The following is a 1049-amino-acid chain: Cilia- and flagella-associated protein 337 (1049 aa).

Residues 81-116 form the EF-hand domain; sequence GTKEEYGELFDKVDVAQDGFINWDKLTSFILLELYE. WD repeat units lie at residues 138 to 177, 358 to 397, 401 to 440, 487 to 528, 531 to 570, and 633 to 671; these read KHKDTIQKVIFLKNSSHYLTISKEGLLAIWGEHLKLQETF, NIAQGIHAFDYHSRLNLIATAGINNKVCLWNPYVVSKPVG, GHSASVIAVQFFVERKQLFSFSKDKVLRLWDIQHQLSIQR, SHEK…KQFT, HGNAEISTMALDANETRLLTGSTDGTVKIWDFNGYCHHTL, and QHHDDILCAAFLPPQTLVTGSYDGEIVLWNNSTENAHHV. Positions 691–712 are disordered; that stretch reads LLSAGRSQPSHPMADHSTTGVR. Residues 695–711 show a composition bias toward polar residues; it reads GRSQPSHPMADHSTTGV. WD repeat units follow at residues 719–766, 769–809, and 825–866; these read EGKN…LLAE, AHSG…LNSS, and PHED…VWIF.

This sequence belongs to the CFAP337 family. In terms of assembly, associates with components of the nexin-dynein regulatory complex (N-DRC) and the CFAP184:CFAP263 complex.

Its subcellular location is the cell projection. The protein localises to the cilium. Functionally, associates with components of the nexin-dynein regulatory complex (N-DRC), a key regulator of ciliary/flagellar motility, and might act as an inner dynein arm (IDA) hub or linkage. The protein is Cilia- and flagella-associated protein 337 of Homo sapiens (Human).